A 484-amino-acid polypeptide reads, in one-letter code: Protein nucleotidyltransferase YdiU (484 aa).

The ATP site is built by G81, G83, R84, K103, D115, G116, R166, and R173. D244 (proton acceptor) is an active-site residue. N245 and D254 together coordinate Mg(2+). D254 serves as a coordination point for ATP.

The protein belongs to the SELO family. It depends on Mg(2+) as a cofactor. The cofactor is Mn(2+).

It catalyses the reaction L-seryl-[protein] + ATP = 3-O-(5'-adenylyl)-L-seryl-[protein] + diphosphate. The catalysed reaction is L-threonyl-[protein] + ATP = 3-O-(5'-adenylyl)-L-threonyl-[protein] + diphosphate. It carries out the reaction L-tyrosyl-[protein] + ATP = O-(5'-adenylyl)-L-tyrosyl-[protein] + diphosphate. The enzyme catalyses L-histidyl-[protein] + UTP = N(tele)-(5'-uridylyl)-L-histidyl-[protein] + diphosphate. It catalyses the reaction L-seryl-[protein] + UTP = O-(5'-uridylyl)-L-seryl-[protein] + diphosphate. The catalysed reaction is L-tyrosyl-[protein] + UTP = O-(5'-uridylyl)-L-tyrosyl-[protein] + diphosphate. Its function is as follows. Nucleotidyltransferase involved in the post-translational modification of proteins. It can catalyze the addition of adenosine monophosphate (AMP) or uridine monophosphate (UMP) to a protein, resulting in modifications known as AMPylation and UMPylation. The polypeptide is Protein nucleotidyltransferase YdiU (Shewanella baltica (strain OS155 / ATCC BAA-1091)).